A 197-amino-acid polypeptide reads, in one-letter code: Imidazoleglycerol-phosphate dehydratase (197 aa).

The protein belongs to the imidazoleglycerol-phosphate dehydratase family.

Its subcellular location is the cytoplasm. The enzyme catalyses D-erythro-1-(imidazol-4-yl)glycerol 3-phosphate = 3-(imidazol-4-yl)-2-oxopropyl phosphate + H2O. The protein operates within amino-acid biosynthesis; L-histidine biosynthesis; L-histidine from 5-phospho-alpha-D-ribose 1-diphosphate: step 6/9. This Rhodopseudomonas palustris (strain HaA2) protein is Imidazoleglycerol-phosphate dehydratase.